Consider the following 232-residue polypeptide: Aliphatic sulfonates import ATP-binding protein SsuB 2 (232 aa).

In terms of domain architecture, ABC transporter spans 1 to 216; it reads MDIRVDRKAF…PRDRRDPLLA (216 aa). Residue 33–40 coordinates ATP; the sequence is GPSGCGKS.

Belongs to the ABC transporter superfamily. Aliphatic sulfonates importer (TC 3.A.1.17.2) family. In terms of assembly, the complex is composed of two ATP-binding proteins (SsuB), two transmembrane proteins (SsuC) and a solute-binding protein (SsuA).

It localises to the cell inner membrane. It carries out the reaction ATP + H2O + aliphatic sulfonate-[sulfonate-binding protein]Side 1 = ADP + phosphate + aliphatic sulfonateSide 2 + [sulfonate-binding protein]Side 1.. Its function is as follows. Part of the ABC transporter complex SsuABC involved in aliphatic sulfonates import. Responsible for energy coupling to the transport system. The chain is Aliphatic sulfonates import ATP-binding protein SsuB 2 from Pseudomonas syringae pv. tomato (strain ATCC BAA-871 / DC3000).